Reading from the N-terminus, the 1050-residue chain is Probable E3 ubiquitin-protein ligase HERC3 (1050 aa).

7 RCC1 repeats span residues 1–51 (MLCW…FLLE), 52–101 (DGEV…ALSD), 102–154 (RGQL…ALAA), 156–207 (GQFF…ALSL), 208–259 (SGAV…VLTK), 261–311 (GGVF…AFVP), and 313–366 (SGLI…IVKQ). The 100-residue stretch at 951–1050 (YKGDYSATHP…LDNYEGFSLA (100 aa)) folds into the HECT domain. Residue Cys-1018 is the Glycyl thioester intermediate of the active site.

In terms of processing, ubiquitinated; which promotes degradation by the proteasome.

The protein localises to the cytoplasm. It is found in the cytoplasmic vesicle. The catalysed reaction is S-ubiquitinyl-[E2 ubiquitin-conjugating enzyme]-L-cysteine + [acceptor protein]-L-lysine = [E2 ubiquitin-conjugating enzyme]-L-cysteine + N(6)-ubiquitinyl-[acceptor protein]-L-lysine.. Its pathway is protein modification; protein ubiquitination. Its function is as follows. E3 ubiquitin-protein ligase which accepts ubiquitin from an E2 ubiquitin-conjugating enzyme in the form of a thioester and then directly transfers the ubiquitin to targeted substrates. This is Probable E3 ubiquitin-protein ligase HERC3 (HERC3) from Homo sapiens (Human).